Here is a 608-residue protein sequence, read N- to C-terminus: Elongation factor 4 (608 aa).

The tr-type G domain maps to 11–193; the sequence is SHIRNFSIVA…AIVHKLPAPK (183 aa). GTP is bound by residues 23-28 and 140-143; these read DHGKST and NKID.

This sequence belongs to the TRAFAC class translation factor GTPase superfamily. Classic translation factor GTPase family. LepA subfamily.

The protein localises to the cell inner membrane. It carries out the reaction GTP + H2O = GDP + phosphate + H(+). Its function is as follows. Required for accurate and efficient protein synthesis under certain stress conditions. May act as a fidelity factor of the translation reaction, by catalyzing a one-codon backward translocation of tRNAs on improperly translocated ribosomes. Back-translocation proceeds from a post-translocation (POST) complex to a pre-translocation (PRE) complex, thus giving elongation factor G a second chance to translocate the tRNAs correctly. Binds to ribosomes in a GTP-dependent manner. The sequence is that of Elongation factor 4 from Rhizobium meliloti (strain 1021) (Ensifer meliloti).